A 1692-amino-acid chain; its full sequence is Tyrosine-protein phosphatase non-receptor type 23 (1692 aa).

The 387-residue stretch at 8–394 (PMIWLDLKEA…AKIEDKNEVL (387 aa)) folds into the BRO1 domain. TPR repeat units lie at residues 250–283 (AVAH…LNEA) and 374–407 (EEKA…DPET). A coiled-coil region spans residues 552 to 639 (KAVLQNLKRI…RALTEANVQY (88 aa)). Disordered stretches follow at residues 711-788 (DREL…PATH), 884-923 (DSVQ…PQPQ), and 944-1199 (TYSI…LLQP). The residue at position 744 (T744) is a Phosphothreonine. The segment at 773–1186 (HFSPGPFPSS…SSSPESQHGG (414 aa)) is his. Low complexity predominate over residues 774–785 (FSPGPFPSSTGP). A compositionally biased stretch (polar residues) spans 884 to 894 (DSVQAPISSHT). Pro residues predominate over residues 897-923 (RPNPTPALPQPCFPVPQPVPQSVPQPQ). Omega-N-methylarginine is present on R974. 21 repeat units span residues 977-978 (PQ), 979-980 (AQ), 981-982 (AQ), 983-984 (PQ), 985-986 (PQ), 987-988 (PQ), 989-990 (PQ), 991-992 (PQ), 993-994 (PQ), 995-996 (PQ), 997-998 (PQ), 999-1000 (PQ), 1001-1002 (PQ), 1003-1004 (PQ), 1005-1006 (SQ), 1007-1008 (SQ), 1009-1010 (PQ), 1011-1012 (PQ), 1013-1014 (PQ), 1015-1016 (PQ), and 1017-1018 (PQ). The tract at residues 977-1018 (PQAQAQPQPQPQPQPQPQPQPQPQPQPQSQSQPQPQPQPQPQ) is 21 X 2 AA approximate tandem repeats of P-Q. The span at 984-1002 (QPQPQPQPQPQPQPQPQPQ) shows a compositional bias: pro residues. Pro residues-rich tracts occupy residues 1093-1102 (FPSPGPPHPH) and 1127-1165 (GPPP…PPPC). S1178 and S1179 each carry phosphoserine. T1187 is subject to Phosphothreonine. A Tyrosine-protein phosphatase domain is found at 1248–1508 (DAIWRELQEA…KFCHEALVRH (261 aa)). C1448 (phosphocysteine intermediate) is an active-site residue. The interval 1574–1638 (ASLPGLVEPP…PSSSLELLAS (65 aa)) is disordered. Over residues 1598 to 1612 (SSSPPPLSSPLPEAP) the composition is skewed to pro residues. Low complexity predominate over residues 1620 to 1638 (VPEAPSLGPPSSSLELLAS). At R1671 the chain carries Omega-N-methylarginine.

This sequence belongs to the protein-tyrosine phosphatase family. Non-receptor class subfamily. Interacts with GRAP2 and GRB2. Interacts with UBAP1 and CHMP4B.

Its subcellular location is the nucleus. The protein localises to the cytoplasm. It localises to the cytoplasmic vesicle. It is found in the endosome. The protein resides in the cytoskeleton. Its subcellular location is the cilium basal body. The catalysed reaction is O-phospho-L-tyrosyl-[protein] + H2O = L-tyrosyl-[protein] + phosphate. Its function is as follows. Plays a role in sorting of endocytic ubiquitinated cargos into multivesicular bodies (MVBs) via its interaction with the ESCRT-I complex (endosomal sorting complex required for transport I), and possibly also other ESCRT complexes. May act as a negative regulator of Ras-mediated mitogenic activity. Plays a role in ciliogenesis. The protein is Tyrosine-protein phosphatase non-receptor type 23 (Ptpn23) of Mus musculus (Mouse).